Consider the following 138-residue polypeptide: Large ribosomal subunit protein eL32 (138 aa).

Belongs to the eukaryotic ribosomal protein eL32 family.

In Saccharolobus islandicus (strain Y.N.15.51 / Yellowstone #2) (Sulfolobus islandicus), this protein is Large ribosomal subunit protein eL32.